The following is a 137-amino-acid chain: Keratin-associated protein 15-1 (137 aa).

It belongs to the PMG family. As to quaternary structure, interacts with hair keratins.

Its function is as follows. In the hair cortex, hair keratin intermediate filaments are embedded in an interfilamentous matrix, consisting of hair keratin-associated proteins (KRTAP), which are essential for the formation of a rigid and resistant hair shaft through their extensive disulfide bond cross-linking with abundant cysteine residues of hair keratins. The matrix proteins include the high-sulfur and high-glycine-tyrosine keratins. This chain is Keratin-associated protein 15-1 (KRTAP15-1), found in Homo sapiens (Human).